Reading from the N-terminus, the 487-residue chain is Cytochrome P450 2C4 (487 aa).

A heme-binding site is contributed by cysteine 432.

It belongs to the cytochrome P450 family. Heme is required as a cofactor.

It localises to the endoplasmic reticulum membrane. The protein resides in the microsome membrane. The enzyme catalyses an organic molecule + reduced [NADPH--hemoprotein reductase] + O2 = an alcohol + oxidized [NADPH--hemoprotein reductase] + H2O + H(+). Functionally, cytochromes P450 are a group of heme-thiolate monooxygenases. In liver microsomes, this enzyme is involved in an NADPH-dependent electron transport pathway. It oxidizes a variety of structurally unrelated compounds, including steroids, fatty acids, and xenobiotics. The chain is Cytochrome P450 2C4 (CYP2C4) from Oryctolagus cuniculus (Rabbit).